The following is a 313-amino-acid chain: Probable cytochrome c oxidase subunit 2 (313 aa).

One can recognise an RPE1 insert domain in the interval 5–51; that stretch reads RYWSKQSYKKLKVDQEHNTTEYTNVCNSTSLGSTYTLPLKMELWKIY. A run of 3 helical transmembrane segments spans residues 39 to 59, 94 to 114, and 131 to 151; these read YTLP…YFLI, LLYI…FVCI, and LLIE…IAVP. The Cu cation site is built by histidine 233, cysteine 268, cysteine 272, and histidine 276.

This sequence belongs to the cytochrome c oxidase subunit 2 family. The cofactor is Cu cation. Heme is required as a cofactor.

It localises to the cell membrane. It catalyses the reaction 4 Fe(II)-[cytochrome c] + O2 + 8 H(+)(in) = 4 Fe(III)-[cytochrome c] + 2 H2O + 4 H(+)(out). In terms of biological role, subunits I and II form the functional core of the enzyme complex. Electrons originating in cytochrome c are transferred via heme a and Cu(A) to the binuclear center formed by heme a3 and Cu(B). The sequence is that of Probable cytochrome c oxidase subunit 2 (ctaC) from Rickettsia prowazekii (strain Madrid E).